A 1239-amino-acid polypeptide reads, in one-letter code: Inner tegument protein (1239 aa).

4 disordered regions span residues 1-20 (MASA…DAQP), 669-704 (GESP…GGGP), 959-980 (RPPP…DTPP), and 1087-1239 (GRNA…AEDE). An interaction with large tegument protein region spans residues 615 to 1239 (NELPKTRSLA…RPPRPTAEDE (625 aa)). Low complexity predominate over residues 1112 to 1123 (DSSPFSFSSSDF). Gly residues predominate over residues 1139 to 1148 (VPGGGGGGEG). The span at 1151 to 1170 (EEERERPSDIDTAARARKVE) shows a compositional bias: basic and acidic residues. The span at 1180-1189 (RTTPSPSRRA) shows a compositional bias: low complexity. The span at 1219 to 1232 (VRPRTRRGATRRPP) shows a compositional bias: basic residues.

It belongs to the herpesviridae inner tegument protein family. Interacts (via C-terminus) with the large tegument protein/LTP (via N-terminus).

Its subcellular location is the virion tegument. It is found in the host cytoplasm. The protein resides in the host nucleus. The protein localises to the host Golgi apparatus. It localises to the host trans-Golgi network. Functionally, plays an essential role in cytoplasmic secondary envelopment during viral egress. Interacts with the capsid via the large tegument protein/LTP and participates in its transport to the host trans-Golgi network (TGN) where secondary envelopment occurs. Modulates tegumentation and capsid accumulation at the viral assembly complex. This is Inner tegument protein from Homo sapiens (Human).